The primary structure comprises 82 residues: Turripeptide IX-07 (82 aa).

Residues 1 to 21 (MGFYMLLTVALLLTSLMNVEA) form the signal peptide. The propeptide occupies 22–39 (TPVNQAERSALEKSGLGN). Cystine bridges form between cysteine 48-cysteine 70, cysteine 55-cysteine 74, and cysteine 60-cysteine 81.

In terms of tissue distribution, expressed by the venom duct.

The protein resides in the secreted. This Gemmula speciosa (Splendid gem-turris) protein is Turripeptide IX-07.